The sequence spans 366 residues: uncharacterized protein (366 aa).

The segment at M1–K135 is disordered. Basic and acidic residues predominate over residues P26–P38. S69 bears the Phosphoserine mark. T76 is modified (phosphothreonine). K78 participates in a covalent cross-link: Glycyl lysine isopeptide (Lys-Gly) (interchain with G-Cter in ubiquitin). The segment covering Q97–H108 has biased composition (basic residues). K187 participates in a covalent cross-link: Glycyl lysine isopeptide (Lys-Gly) (interchain with G-Cter in ubiquitin). T189 carries the phosphothreonine modification. K242 participates in a covalent cross-link: Glycyl lysine isopeptide (Lys-Gly) (interchain with G-Cter in ubiquitin). Residues S288 and S294 each carry the phosphoserine modification. The segment at T313–H366 is disordered. Residues G316–R327 are compositionally biased toward basic and acidic residues. Over residues T328–S338 the composition is skewed to polar residues. Residues G339–T349 show a composition bias toward basic and acidic residues. Positions L353–H366 are enriched in basic residues. A Phosphoserine modification is found at S359.

Belongs to the pal1 family.

The protein localises to the cytoplasm. Its subcellular location is the nucleus. This is an uncharacterized protein from Saccharomyces cerevisiae (strain ATCC 204508 / S288c) (Baker's yeast).